An 83-amino-acid polypeptide reads, in one-letter code: Gas vesicle protein G1 (83 aa).

Belongs to the gas vesicle GvpG family. GvpF to GvpM interact with each other in vitro, and may form multi-subunit complex(es). Might interact with GvpA1.

The protein localises to the gas vesicle. Proteins GvpF to GvpM might be involved in nucleating gas vesicle formation. A minor component of the gas vesicle. Gas vesicles are hollow, gas filled proteinaceous nanostructures found in several microbial planktonic microorganisms. They allow positioning of halobacteria at the optimal depth for growth in the poorly aerated, shallow brine pools of their habitat. Its function is as follows. Expression of a 9.5 kb p-vac DNA fragment containing 2 divergently transcribed regions (gvpD-gvpE-gvpF-gvpG-gvpH-gvpI-gvpJ-gvpK-gvpL-gvpM and gvpA-gvpC-gvpN-gvpO) allows H.volcanii to produce gas vesicles. A minimal gas vesicle can be made in H.volcanii by gvpA1-gvpO1 plus gvpF1-gvpG1-gvpJ1-gvpK1-gvpL1-gvpM1; lack of enough GvpJ1 prevents formation. A similar region restores gas vesicle production in H.halobium without the p-vac locus, but it still has the c-vac locus. The polypeptide is Gas vesicle protein G1 (gvpG11) (Halobacterium salinarum (strain ATCC 700922 / JCM 11081 / NRC-1) (Halobacterium halobium)).